Here is a 77-residue protein sequence, read N- to C-terminus: Protein UL148C (77 aa).

The next 2 membrane-spanning stretches (helical) occupy residues 10 to 30 (VLYL…AVAV) and 35 to 55 (IAWA…VGAA).

It is found in the host membrane. The chain is Protein UL148C (UL148C) from Homo sapiens (Human).